A 365-amino-acid chain; its full sequence is Protein AC54 (365 aa).

Interacts with C42 and VP80. Interacts with protein 38K.

The protein localises to the virion. Its function is as follows. Structural protein that participates in nucleocapsid assembly. Plays an essential role in the proper localization of the major capsid protein VP39, and the minor capsid protein 38K into the capsid assembly site. This chain is Protein AC54 (AC54), found in Lepidoptera (butterflies and moths).